The primary structure comprises 352 residues: Histidinol-phosphate aminotransferase (352 aa).

The residue at position 221 (K221) is an N6-(pyridoxal phosphate)lysine.

The protein belongs to the class-II pyridoxal-phosphate-dependent aminotransferase family. Histidinol-phosphate aminotransferase subfamily. Homodimer. Pyridoxal 5'-phosphate is required as a cofactor.

The catalysed reaction is L-histidinol phosphate + 2-oxoglutarate = 3-(imidazol-4-yl)-2-oxopropyl phosphate + L-glutamate. The protein operates within amino-acid biosynthesis; L-histidine biosynthesis; L-histidine from 5-phospho-alpha-D-ribose 1-diphosphate: step 7/9. This Staphylococcus aureus (strain MSSA476) protein is Histidinol-phosphate aminotransferase.